The sequence spans 145 residues: Large ribosomal subunit protein uL15 (145 aa).

The tract at residues methionine 1–glutamine 54 is disordered. Residues serine 42–glycine 52 are compositionally biased toward gly residues.

Belongs to the universal ribosomal protein uL15 family. In terms of assembly, part of the 50S ribosomal subunit.

Functionally, binds to the 23S rRNA. This is Large ribosomal subunit protein uL15 from Mycoplasma capricolum subsp. capricolum (strain California kid / ATCC 27343 / NCTC 10154).